We begin with the raw amino-acid sequence, 298 residues long: Glycine--tRNA ligase alpha subunit (298 aa).

It belongs to the class-II aminoacyl-tRNA synthetase family. Tetramer of two alpha and two beta subunits.

It localises to the cytoplasm. The enzyme catalyses tRNA(Gly) + glycine + ATP = glycyl-tRNA(Gly) + AMP + diphosphate. This chain is Glycine--tRNA ligase alpha subunit, found in Gloeothece citriformis (strain PCC 7424) (Cyanothece sp. (strain PCC 7424)).